Here is a 618-residue protein sequence, read N- to C-terminus: Neurosecretory protein VGF (618 aa).

The signal sequence occupies residues 1–23 (MKSLRLPATVLFCLLLLIKGLGA). Disordered regions lie at residues 23-46 (AAPP…PVAG), 86-201 (VLLQ…LESP), and 219-262 (PERA…GEAL). Positions 26–37 (PGHPEAQPPPPS) are enriched in pro residues. Low complexity predominate over residues 180–195 (ETAAAETETRTHTLTR). Residues 301-332 (LAQVEAGRRQAEATRQAAAQEERLADLASDLL) adopt a coiled-coil conformation. Q310 is modified (pyrrolidone carboxylic acid). The segment at 342 to 603 (RQRGLGGRGL…EAEERRLQEQ (262 aa)) is disordered. The span at 356-378 (GGGRETARQQEEAEQERRGGEER) shows a compositional bias: basic and acidic residues. Acidic residues predominate over residues 379 to 395 (VGEEDEEAAEAEAEAEE). Residues 416 to 434 (AEDKRSREETPGHRRKEAE) show a composition bias toward basic and acidic residues. At S421 the chain carries Phosphoserine. At T425 the chain carries Phosphothreonine. Residues 435 to 451 (GAEEGGAEDEDDDEEMD) are compositionally biased toward acidic residues. The span at 490-500 (PPEPVPPPRAA) shows a compositional bias: pro residues. Residues 578 to 602 (HYPDREAQARRAQEEAEAEERRLQE) show a composition bias toward basic and acidic residues.

In terms of processing, multiple peptides are derived from VGF, with activities in synaptic plasticity, antidepression, penile erection, autonomic activation, and increases in energy expenditure.

The protein resides in the secreted. It localises to the cytoplasmic vesicle. Its subcellular location is the secretory vesicle. In terms of biological role, secreted polyprotein that is packaged and proteolytically processed by prohormone convertases PCSK1 and PCSK2 in a cell-type-specific manner. VGF and peptides derived from its processing play many roles in neurogenesis and neuroplasticity associated with learning, memory, depression and chronic pain. Its function is as follows. Plays a role in the control of body fluid homeostasis by regulating vasopressin release. Suppresses presynaptic glutamatergic neurons connected to vasopressin neurons. Plays a role in the control of body fluid homeostasis by regulating vasopressin release. Activates GABAergic interneurons which are inhibitory neurons of the nervous system and thereby suppresses presynaptic glutamatergic neurons. Also stimulates feeding behavior in an orexin-dependent manner in the hypothalamus. Functions as a positive regulator for the activation of orexin neurons resulting in elevated gastric acid secretion and gastric emptying. In Bos taurus (Bovine), this protein is Neurosecretory protein VGF.